We begin with the raw amino-acid sequence, 106 residues long: UPF0145 protein PputGB1_2909 (106 aa).

Belongs to the UPF0145 family.

This Pseudomonas putida (strain GB-1) protein is UPF0145 protein PputGB1_2909.